We begin with the raw amino-acid sequence, 322 residues long: Olfactory receptor 5P2 (322 aa).

The Extracellular segment spans residues 1–28; the sequence is MNSLKDGNHTALTGFILLGLTDDPILRV. N8 carries N-linked (GlcNAc...) asparagine glycosylation. A helical transmembrane segment spans residues 29 to 42; it reads ILFMIILSGNLSII. The Cytoplasmic portion of the chain corresponds to 43-50; sequence ILIRISSQ. Residues 51-71 traverse the membrane as a helical segment; it reads LHHPMYFFLSHLAFADMAYSS. Over 72 to 95 the chain is Extracellular; sequence SVTPNMLVNFLVERNTVSYLGCAI. A disulfide bond links C93 and C185. A helical transmembrane segment spans residues 96–116; sequence QLGSAAFFATVECVLLAAMAY. Residues 117-135 are Cytoplasmic-facing; the sequence is DRFVAICSPLLYSTKMSTQ. The helical transmembrane segment at 136 to 156 threads the bilayer; it reads VSVQLLLVVYIAGFLIAVSYT. The Extracellular segment spans residues 157–192; sequence TSFYFLLFCGPNQVNHFFCDFAPLLELSCSDISVST. A helical transmembrane segment spans residues 193–213; that stretch reads VVLSFSSGSIIVVTVCVIAVC. Residues 214–233 are Cytoplasmic-facing; sequence YIYILITILKMRSTEGHHKA. Residues 234 to 254 form a helical membrane-spanning segment; the sequence is FSTCTSHLTVVTLFYGTITFI. The Extracellular segment spans residues 255-267; that stretch reads YVMPNFSYSTDQN. N259 carries an N-linked (GlcNAc...) asparagine glycan. Residues 268–288 traverse the membrane as a helical segment; the sequence is KVVSVLYTVVIPMLNPLIYSL. The Cytoplasmic segment spans residues 289–322; it reads RNKEIKGALKRELVRKILSHDACYFSRTSNNDIT.

It belongs to the G-protein coupled receptor 1 family. Expressed in the tongue.

The protein resides in the cell membrane. In terms of biological role, odorant receptor (Potential). May be involved in taste perception. The protein is Olfactory receptor 5P2 (OR5P2) of Homo sapiens (Human).